A 168-amino-acid chain; its full sequence is Phosphopantetheine adenylyltransferase (168 aa).

S9 is a binding site for substrate. ATP-binding positions include 9–10 (SF) and H17. Residues K41, L73, and R87 each coordinate substrate. ATP is bound by residues 88–90 (GLR), E98, and 123–129 (YAFLSSS).

Belongs to the bacterial CoaD family. As to quaternary structure, homohexamer. It depends on Mg(2+) as a cofactor.

The protein localises to the cytoplasm. The enzyme catalyses (R)-4'-phosphopantetheine + ATP + H(+) = 3'-dephospho-CoA + diphosphate. It participates in cofactor biosynthesis; coenzyme A biosynthesis; CoA from (R)-pantothenate: step 4/5. In terms of biological role, reversibly transfers an adenylyl group from ATP to 4'-phosphopantetheine, yielding dephospho-CoA (dPCoA) and pyrophosphate. In Heliobacterium modesticaldum (strain ATCC 51547 / Ice1), this protein is Phosphopantetheine adenylyltransferase.